The sequence spans 342 residues: Dihydroorotase (342 aa).

2 residues coordinate Zn(2+): His13 and His15. Residues 15-17 and Asn41 contribute to the substrate site; that span reads HLR. The Zn(2+) site is built by Lys98, His135, and His173. An N6-carboxylysine modification is found at Lys98. A substrate-binding site is contributed by His135. Substrate is bound at residue Leu218. Residue Asp246 coordinates Zn(2+). Residue Asp246 is part of the active site. 2 residues coordinate substrate: His250 and Ala262.

The protein belongs to the metallo-dependent hydrolases superfamily. DHOase family. Class II DHOase subfamily. In terms of assembly, homodimer. Zn(2+) serves as cofactor.

The enzyme catalyses (S)-dihydroorotate + H2O = N-carbamoyl-L-aspartate + H(+). It participates in pyrimidine metabolism; UMP biosynthesis via de novo pathway; (S)-dihydroorotate from bicarbonate: step 3/3. Its function is as follows. Catalyzes the reversible cyclization of carbamoyl aspartate to dihydroorotate. The sequence is that of Dihydroorotase from Vibrio cholerae serotype O1 (strain ATCC 39315 / El Tor Inaba N16961).